We begin with the raw amino-acid sequence, 177 residues long: Peptide methionine sulfoxide reductase MsrA 2 (177 aa).

Cysteine 12 is a catalytic residue.

The protein belongs to the MsrA Met sulfoxide reductase family.

The catalysed reaction is L-methionyl-[protein] + [thioredoxin]-disulfide + H2O = L-methionyl-(S)-S-oxide-[protein] + [thioredoxin]-dithiol. It carries out the reaction [thioredoxin]-disulfide + L-methionine + H2O = L-methionine (S)-S-oxide + [thioredoxin]-dithiol. Functionally, has an important function as a repair enzyme for proteins that have been inactivated by oxidation. Catalyzes the reversible oxidation-reduction of methionine sulfoxide in proteins to methionine. In Staphylococcus aureus (strain Mu50 / ATCC 700699), this protein is Peptide methionine sulfoxide reductase MsrA 2 (msrA2).